The following is a 326-amino-acid chain: Cytosolic sulfotransferase 7 (326 aa).

72-77 (KSGTTW) is a 3'-phosphoadenylyl sulfate binding site. His138 serves as the catalytic Proton acceptor. 3'-phosphoadenylyl sulfate-binding positions include Arg160, Ser168, Tyr226, and 292-294 (RKG).

Belongs to the sulfotransferase 1 family.

The protein resides in the cytoplasm. Functionally, sulfotransferase that utilizes 3'-phospho-5'-adenylyl sulfate (PAPS) as sulfonate donor. This is Cytosolic sulfotransferase 7 (SOT7) from Arabidopsis thaliana (Mouse-ear cress).